We begin with the raw amino-acid sequence, 426 residues long: Histidine--tRNA ligase (426 aa).

Belongs to the class-II aminoacyl-tRNA synthetase family. Homodimer.

The protein localises to the cytoplasm. It carries out the reaction tRNA(His) + L-histidine + ATP = L-histidyl-tRNA(His) + AMP + diphosphate + H(+). The chain is Histidine--tRNA ligase from Streptococcus equi subsp. equi (strain 4047).